Consider the following 297-residue polypeptide: 4-hydroxy-tetrahydrodipicolinate synthase (297 aa).

Threonine 47 lines the pyruvate pocket. Tyrosine 135 acts as the Proton donor/acceptor in catalysis. The Schiff-base intermediate with substrate role is filled by lysine 163. Position 205 (isoleucine 205) interacts with pyruvate.

The protein belongs to the DapA family. Homotetramer; dimer of dimers.

It is found in the cytoplasm. It carries out the reaction L-aspartate 4-semialdehyde + pyruvate = (2S,4S)-4-hydroxy-2,3,4,5-tetrahydrodipicolinate + H2O + H(+). The protein operates within amino-acid biosynthesis; L-lysine biosynthesis via DAP pathway; (S)-tetrahydrodipicolinate from L-aspartate: step 3/4. Catalyzes the condensation of (S)-aspartate-beta-semialdehyde [(S)-ASA] and pyruvate to 4-hydroxy-tetrahydrodipicolinate (HTPA). The chain is 4-hydroxy-tetrahydrodipicolinate synthase from Dehalococcoides mccartyi (strain ATCC BAA-2266 / KCTC 15142 / 195) (Dehalococcoides ethenogenes (strain 195)).